Here is a 229-residue protein sequence, read N- to C-terminus: Transcriptional activator protein IrlR (229 aa).

The 114-residue stretch at 2-115 (RILIVEDEPK…ELVARVRSIL (114 aa)) folds into the Response regulatory domain. At Asp-51 the chain carries 4-aspartylphosphate. The segment at residues 123-221 (STVLRIADLE…VRGMGYVLEV (99 aa)) is a DNA-binding region (ompR/PhoB-type).

In terms of processing, phosphorylated by IrlS.

Member of the two-component regulatory system IrlR/IrlS. May be involved in invasion of eukaryotic cells and heavy-metal resistance. This Burkholderia pseudomallei (strain 1026b) protein is Transcriptional activator protein IrlR (irlR).